Reading from the N-terminus, the 236-residue chain is 2-C-methyl-D-erythritol 4-phosphate cytidylyltransferase (236 aa).

This sequence belongs to the IspD/TarI cytidylyltransferase family. IspD subfamily. In terms of assembly, homodimer.

It carries out the reaction 2-C-methyl-D-erythritol 4-phosphate + CTP + H(+) = 4-CDP-2-C-methyl-D-erythritol + diphosphate. The protein operates within isoprenoid biosynthesis; isopentenyl diphosphate biosynthesis via DXP pathway; isopentenyl diphosphate from 1-deoxy-D-xylulose 5-phosphate: step 2/6. Its function is as follows. Catalyzes the formation of 4-diphosphocytidyl-2-C-methyl-D-erythritol from CTP and 2-C-methyl-D-erythritol 4-phosphate (MEP). The polypeptide is 2-C-methyl-D-erythritol 4-phosphate cytidylyltransferase (Salmonella typhimurium (strain LT2 / SGSC1412 / ATCC 700720)).